Reading from the N-terminus, the 224-residue chain is UPF0758 protein VS_0182 (224 aa).

The segment at 1–21 (MPISKMPVESMPREKLLSRGP) is disordered. The MPN domain maps to 102–224 (ALTSPSHTKL…VISFAERGWI (123 aa)). Residues histidine 173, histidine 175, and aspartate 186 each coordinate Zn(2+). The JAMM motif motif lies at 173–186 (HNHPSGVAEPSQAD).

This sequence belongs to the UPF0758 family.

This is UPF0758 protein VS_0182 from Vibrio atlanticus (strain LGP32) (Vibrio splendidus (strain Mel32)).